A 191-amino-acid polypeptide reads, in one-letter code: Uridylate kinase (191 aa).

12-17 contributes to the ATP binding site; it reads GAGKGT. Residues 33-63 form an NMP region; it reads SAGDCLREEQNRPGSKYGNLIKEYIKDGKIV. A ribonucleoside 5'-phosphate is bound by residues R39, 61 to 63, 91 to 94, and Q98; these read KIV and GFPR. Positions 128–138 are LID; sequence HRGKTSGRSDD. An ATP-binding site is contributed by R129. R135 and R146 together coordinate a ribonucleoside 5'-phosphate. Q174 serves as a coordination point for ATP.

It belongs to the adenylate kinase family. UMP-CMP kinase subfamily. In terms of assembly, monomer. The cofactor is Mg(2+).

The protein resides in the cytoplasm. Its subcellular location is the nucleus. The enzyme catalyses UMP + ATP = UDP + ADP. Its function is as follows. Catalyzes the phosphorylation of pyrimidine nucleoside monophosphates at the expense of ATP. Plays an important role in de novo pyrimidine nucleotide biosynthesis. Has preference for UMP and dUMP as phosphate acceptors, but can also use CMP, dCMP and AMP. This is Uridylate kinase from Schizosaccharomyces pombe (strain 972 / ATCC 24843) (Fission yeast).